Consider the following 98-residue polypeptide: MLSINLNLIVAFLLALMGVLIYRSHLMSTLLCLEGMMLSLFILMTLLITHFHMFSMSMTPLILLVFSACEAAIGLALLVKISATHGSDHIQNLNLLQC.

Helical transmembrane passes span 1–21 (MLSI…GVLI), 29–49 (TLLC…LLIT), and 59–79 (TPLI…ALLV).

The protein belongs to the complex I subunit 4L family. As to quaternary structure, core subunit of respiratory chain NADH dehydrogenase (Complex I) which is composed of 45 different subunits.

The protein localises to the mitochondrion inner membrane. It catalyses the reaction a ubiquinone + NADH + 5 H(+)(in) = a ubiquinol + NAD(+) + 4 H(+)(out). Functionally, core subunit of the mitochondrial membrane respiratory chain NADH dehydrogenase (Complex I) which catalyzes electron transfer from NADH through the respiratory chain, using ubiquinone as an electron acceptor. Part of the enzyme membrane arm which is embedded in the lipid bilayer and involved in proton translocation. The chain is NADH-ubiquinone oxidoreductase chain 4L (MT-ND4L) from Sminthopsis crassicaudata (Fat-tailed dunnart).